The chain runs to 284 residues: Orotidine 5'-phosphate decarboxylase (284 aa).

The Proton donor role is filled by Lys-95.

The protein belongs to the OMP decarboxylase family. Type 2 subfamily.

The catalysed reaction is orotidine 5'-phosphate + H(+) = UMP + CO2. It participates in pyrimidine metabolism; UMP biosynthesis via de novo pathway; UMP from orotate: step 2/2. In Leptothrix cholodnii (strain ATCC 51168 / LMG 8142 / SP-6) (Leptothrix discophora (strain SP-6)), this protein is Orotidine 5'-phosphate decarboxylase.